The sequence spans 566 residues: CTP synthase (566 aa).

The segment at 1-282 (MSIKRAQLGG…DAYIIDQLGL (282 aa)) is amidoligase domain. Residue serine 23 coordinates CTP. UTP is bound at residue serine 23. Residues 24–29 (SLGKGL) and aspartate 81 each bind ATP. Mg(2+) contacts are provided by aspartate 81 and glutamate 156. CTP contacts are provided by residues 163–165 (DIE), 203–208 (KTKPTQ), and lysine 239. UTP contacts are provided by residues 203–208 (KTKPTQ) and lysine 239. One can recognise a Glutamine amidotransferase type-1 domain in the interval 308–556 (TIGLVGKYID…IGAALDRQKA (249 aa)). Glycine 371 is a binding site for L-glutamine. The Nucleophile; for glutamine hydrolysis role is filled by cysteine 398. L-glutamine-binding positions include 399 to 402 (LGLQ), glutamate 422, and arginine 482. Catalysis depends on residues histidine 529 and glutamate 531.

This sequence belongs to the CTP synthase family. Homotetramer.

It catalyses the reaction UTP + L-glutamine + ATP + H2O = CTP + L-glutamate + ADP + phosphate + 2 H(+). It carries out the reaction L-glutamine + H2O = L-glutamate + NH4(+). The catalysed reaction is UTP + NH4(+) + ATP = CTP + ADP + phosphate + 2 H(+). It functions in the pathway pyrimidine metabolism; CTP biosynthesis via de novo pathway; CTP from UDP: step 2/2. Its activity is regulated as follows. Allosterically activated by GTP, when glutamine is the substrate; GTP has no effect on the reaction when ammonia is the substrate. The allosteric effector GTP functions by stabilizing the protein conformation that binds the tetrahedral intermediate(s) formed during glutamine hydrolysis. Inhibited by the product CTP, via allosteric rather than competitive inhibition. Its function is as follows. Catalyzes the ATP-dependent amination of UTP to CTP with either L-glutamine or ammonia as the source of nitrogen. Regulates intracellular CTP levels through interactions with the four ribonucleotide triphosphates. The protein is CTP synthase of Leifsonia xyli subsp. xyli (strain CTCB07).